The primary structure comprises 302 residues: Oxygen-dependent coproporphyrinogen-III oxidase (302 aa).

A substrate-binding site is contributed by Ser-94. Residues His-98 and His-108 each contribute to the a divalent metal cation site. The active-site Proton donor is the His-108. 110 to 112 (NVR) lines the substrate pocket. Positions 147 and 177 each coordinate a divalent metal cation. The interval 242–277 (YVEFNLVWDRGTLFGLQSGGRTESILMSMPPLARWE) is important for dimerization. Substrate is bound at residue 260–262 (GGR).

This sequence belongs to the aerobic coproporphyrinogen-III oxidase family. Homodimer. A divalent metal cation serves as cofactor.

Its subcellular location is the cytoplasm. It catalyses the reaction coproporphyrinogen III + O2 + 2 H(+) = protoporphyrinogen IX + 2 CO2 + 2 H2O. The protein operates within porphyrin-containing compound metabolism; protoporphyrin-IX biosynthesis; protoporphyrinogen-IX from coproporphyrinogen-III (O2 route): step 1/1. In terms of biological role, involved in the heme biosynthesis. Catalyzes the aerobic oxidative decarboxylation of propionate groups of rings A and B of coproporphyrinogen-III to yield the vinyl groups in protoporphyrinogen-IX. The sequence is that of Oxygen-dependent coproporphyrinogen-III oxidase from Photorhabdus laumondii subsp. laumondii (strain DSM 15139 / CIP 105565 / TT01) (Photorhabdus luminescens subsp. laumondii).